The sequence spans 334 residues: Mitochondrial ribosome-associated GTPase 1 (334 aa).

The CP-type G domain occupies 36 to 209; that stretch reads AKGLKKMQSS…LLDTPGVLAP (174 aa). Residues 83 to 86, 153 to 158, and glycine 205 each bind GTP; these read NKMD and NVGKSS.

It belongs to the TRAFAC class YlqF/YawG GTPase family. MTG1 subfamily. Associates with the mitochondrial ribosome large subunit; the association occurs in a GTP-dependent manner.

Its subcellular location is the mitochondrion inner membrane. Plays a role in the regulation of the mitochondrial ribosome assembly and of translational activity. Displays mitochondrial GTPase activity. The polypeptide is Mitochondrial ribosome-associated GTPase 1 (MTG1) (Homo sapiens (Human)).